We begin with the raw amino-acid sequence, 22 residues long: FVDRNRIPRSNNGPKIPIISNP.

Residues 1-22 (FVDRNRIPRSNNGPKIPIISNP) are disordered.

The protein localises to the secreted. Its function is as follows. Antibacterial peptide active against Gram-positive bacterium M.luteus and Gram-negative bacterium E.coli. The chain is Proline-rich peptide from Calliphora vicina (Blue blowfly).